A 119-amino-acid polypeptide reads, in one-letter code: uncharacterized protein (119 aa).

This is an uncharacterized protein from Bacillus subtilis (strain 168).